A 158-amino-acid chain; its full sequence is NAD(P)H-quinone oxidoreductase subunit N (158 aa).

The protein belongs to the complex I NdhN subunit family. NDH-1 can be composed of about 15 different subunits; different subcomplexes with different compositions have been identified which probably have different functions.

Its subcellular location is the cellular thylakoid membrane. The catalysed reaction is a plastoquinone + NADH + (n+1) H(+)(in) = a plastoquinol + NAD(+) + n H(+)(out). The enzyme catalyses a plastoquinone + NADPH + (n+1) H(+)(in) = a plastoquinol + NADP(+) + n H(+)(out). In terms of biological role, NDH-1 shuttles electrons from an unknown electron donor, via FMN and iron-sulfur (Fe-S) centers, to quinones in the respiratory and/or the photosynthetic chain. The immediate electron acceptor for the enzyme in this species is believed to be plastoquinone. Couples the redox reaction to proton translocation, and thus conserves the redox energy in a proton gradient. Cyanobacterial NDH-1 also plays a role in inorganic carbon-concentration. The protein is NAD(P)H-quinone oxidoreductase subunit N of Prochlorococcus marinus (strain MIT 9301).